Here is a 360-residue protein sequence, read N- to C-terminus: Photosystem II protein D1 (360 aa).

3 helical membrane passes run Y29 to S46, H118 to L133, and W142 to A156. H118 contributes to the chlorophyll a binding site. Position 126 (Y126) interacts with pheophytin a. Residues D170 and E189 each coordinate [CaMn4O5] cluster. Residues F197–L218 form a helical membrane-spanning segment. H198 is a binding site for chlorophyll a. A quinone contacts are provided by residues H215 and S264–F265. A Fe cation-binding site is contributed by H215. A Fe cation-binding site is contributed by H272. Residues F274–M288 form a helical membrane-spanning segment. H332, E333, D342, and A344 together coordinate [CaMn4O5] cluster. Positions S345 to G360 are excised as a propeptide.

The protein belongs to the reaction center PufL/M/PsbA/D family. As to quaternary structure, PSII is composed of 1 copy each of membrane proteins PsbA, PsbB, PsbC, PsbD, PsbE, PsbF, PsbH, PsbI, PsbJ, PsbK, PsbL, PsbM, PsbT, PsbX, PsbY, PsbZ, Psb30/Ycf12, at least 3 peripheral proteins of the oxygen-evolving complex and a large number of cofactors. It forms dimeric complexes. The D1/D2 heterodimer binds P680, chlorophylls that are the primary electron donor of PSII, and subsequent electron acceptors. It shares a non-heme iron and each subunit binds pheophytin, quinone, additional chlorophylls, carotenoids and lipids. D1 provides most of the ligands for the Mn4-Ca-O5 cluster of the oxygen-evolving complex (OEC). There is also a Cl(-1) ion associated with D1 and D2, which is required for oxygen evolution. The PSII complex binds additional chlorophylls, carotenoids and specific lipids. serves as cofactor. Post-translationally, tyr-161 forms a radical intermediate that is referred to as redox-active TyrZ, YZ or Y-Z. In terms of processing, C-terminally processed by CTPA; processing is essential to allow assembly of the oxygen-evolving complex and thus photosynthetic growth.

The protein localises to the plastid. The protein resides in the chloroplast thylakoid membrane. It carries out the reaction 2 a plastoquinone + 4 hnu + 2 H2O = 2 a plastoquinol + O2. In terms of biological role, photosystem II (PSII) is a light-driven water:plastoquinone oxidoreductase that uses light energy to abstract electrons from H(2)O, generating O(2) and a proton gradient subsequently used for ATP formation. It consists of a core antenna complex that captures photons, and an electron transfer chain that converts photonic excitation into a charge separation. The D1/D2 (PsbA/PsbD) reaction center heterodimer binds P680, the primary electron donor of PSII as well as several subsequent electron acceptors. In Palmaria palmata (Dulse), this protein is Photosystem II protein D1.